We begin with the raw amino-acid sequence, 180 residues long: Large ribosomal subunit protein uL5 (180 aa).

The protein belongs to the universal ribosomal protein uL5 family. In terms of assembly, part of the 50S ribosomal subunit; part of the 5S rRNA/L5/L18/L25 subcomplex. Contacts the 5S rRNA and the P site tRNA. Forms a bridge to the 30S subunit in the 70S ribosome.

In terms of biological role, this is one of the proteins that bind and probably mediate the attachment of the 5S RNA into the large ribosomal subunit, where it forms part of the central protuberance. In the 70S ribosome it contacts protein S13 of the 30S subunit (bridge B1b), connecting the 2 subunits; this bridge is implicated in subunit movement. Contacts the P site tRNA; the 5S rRNA and some of its associated proteins might help stabilize positioning of ribosome-bound tRNAs. This chain is Large ribosomal subunit protein uL5, found in Streptococcus pyogenes serotype M1.